Here is a 153-residue protein sequence, read N- to C-terminus: uncharacterized protein (153 aa).

To M.jannaschii MJ1183.

This is an uncharacterized protein from Methanothermobacter thermautotrophicus (strain ATCC 29096 / DSM 1053 / JCM 10044 / NBRC 100330 / Delta H) (Methanobacterium thermoautotrophicum).